The chain runs to 483 residues: Arginine/agmatine antiporter (483 aa).

A run of 12 helical transmembrane segments spans residues Ile-11 to Phe-31, Ala-41 to Ala-61, Gly-85 to Gly-105, Tyr-124 to Phe-144, Phe-157 to Thr-177, Ser-208 to Gly-228, Ala-239 to Phe-259, Val-289 to Leu-309, Pro-336 to Phe-356, Met-364 to Val-384, Leu-415 to Leu-435, and Glu-458 to Ala-478.

It belongs to the amino acid-polyamine-organocation (APC) superfamily. Basic amino acid/polyamine antiporter (APA) (TC 2.A.3.2) family.

It is found in the cell inner membrane. Catalyzes the exchange of L-arginine for agmatine. The arginine uptake by the bacterium in the macrophage may be a virulence factor against the host innate immune response. The polypeptide is Arginine/agmatine antiporter (aaxC) (Chlamydia trachomatis serovar A (strain ATCC VR-571B / DSM 19440 / HAR-13)).